The sequence spans 75 residues: Meucin-49 (75 aa).

The signal sequence occupies residues Met1–Ser22.

This sequence belongs to the non-disulfide-bridged peptide (NDBP) superfamily. Long chain multifunctional peptide (group 2) family. Expressed by the venom gland.

The protein resides in the secreted. Functionally, insecticidal toxin and antimicrobial peptide with potent activity against both Gram-negative and -positive bacteria, as well as against fungi. Acts by disrupting bacterial membrane integrity. Shows broad-spectrum and highly potent bactericidal activities against the Gram-positive bacteria B.cereus, B.megaterium, B.subtilis, M.luteus, S.aureus, S.epidermidis, S.warneri, S.griseus, S.scabiei, S.mutans, S.salivarius, and S.sanguinis. Also exhibits a wide spectrum of activity against the Gram-negative bacteria A.faecalis, E.coli, P.aeruginosa, P.solanacearum, S.enterica, S.marcescens, and S.maltophilia. Also shows antimicrobial activities against the fungal strains Aspergillus flavus, A.fumigatus, A.nidulans, A.niger, Beauveria bassiana, and Saccharomyces cerevisiae. Its antibiotic activity is potentiated by other antibacterial peptides such as MeuNaTxbeta-4. Also induces cytolysis on mice, lizards and birds erythrocytes. The sequence is that of Meucin-49 from Mesobuthus eupeus (Lesser Asian scorpion).